The chain runs to 371 residues: Putative glutamate--cysteine ligase 2 (371 aa).

Belongs to the glutamate--cysteine ligase type 2 family. YbdK subfamily.

It catalyses the reaction L-cysteine + L-glutamate + ATP = gamma-L-glutamyl-L-cysteine + ADP + phosphate + H(+). Functionally, ATP-dependent carboxylate-amine ligase which exhibits weak glutamate--cysteine ligase activity. The sequence is that of Putative glutamate--cysteine ligase 2 from Burkholderia lata (strain ATCC 17760 / DSM 23089 / LMG 22485 / NCIMB 9086 / R18194 / 383).